The primary structure comprises 681 residues: Pseudohemocyanin-2 (681 aa).

An N-terminal signal peptide occupies residues 1-21 (VLLCSLVAATAAWPYFGGFQR). Asn-98, Asn-191, Asn-228, and Asn-624 each carry an N-linked (GlcNAc...) asparagine glycan.

Belongs to the tyrosinase family. Hemocyanin subfamily. In terms of assembly, hexamer. In terms of tissue distribution, strongly expressed in ovaries. Also expressed in heart. Not detected in hepatopancreas, gills, connective tissue or muscle.

Functionally, does not function as a hemocyanin. This is Pseudohemocyanin-2 from Homarus americanus (American lobster).